The chain runs to 176 residues: Macro domain-containing protein lmo2759 (176 aa).

Positions 1–175 (MEITIVKGDI…LYNKLINSEV (175 aa)) constitute a Macro domain.

This sequence belongs to the MacroD-type family.

This is Macro domain-containing protein lmo2759 from Listeria monocytogenes serovar 1/2a (strain ATCC BAA-679 / EGD-e).